We begin with the raw amino-acid sequence, 72 residues long: MARVTVEDCLDKVETRFDLVVLASMRANKILKNGYSESMENEKKEKATVVALREIAESEITSEQILRNEIEG.

It belongs to the RNA polymerase subunit omega family. The RNAP catalytic core consists of 2 alpha, 1 beta, 1 beta' and 1 omega subunit. When a sigma factor is associated with the core the holoenzyme is formed, which can initiate transcription.

The catalysed reaction is RNA(n) + a ribonucleoside 5'-triphosphate = RNA(n+1) + diphosphate. Its function is as follows. Promotes RNA polymerase assembly. Latches the N- and C-terminal regions of the beta' subunit thereby facilitating its interaction with the beta and alpha subunits. This is DNA-directed RNA polymerase subunit omega from Francisella tularensis subsp. holarctica (strain LVS).